Reading from the N-terminus, the 263-residue chain is Ribonuclease HII (263 aa).

Residues 71–262 form the RNase H type-2 domain; it reads QAIAGIDEVG…VKSMCCDSTN (192 aa). A divalent metal cation-binding residues include D77, E78, and D172.

Belongs to the RNase HII family. Mn(2+) serves as cofactor. Requires Mg(2+) as cofactor.

It is found in the cytoplasm. It carries out the reaction Endonucleolytic cleavage to 5'-phosphomonoester.. Endonuclease that specifically degrades the RNA of RNA-DNA hybrids. The protein is Ribonuclease HII of Streptococcus pyogenes serotype M12 (strain MGAS2096).